We begin with the raw amino-acid sequence, 547 residues long: DNA mismatch repair protein MutL (547 aa).

The protein belongs to the DNA mismatch repair MutL/HexB family.

Its function is as follows. This protein is involved in the repair of mismatches in DNA. It is required for dam-dependent methyl-directed DNA mismatch repair. May act as a 'molecular matchmaker', a protein that promotes the formation of a stable complex between two or more DNA-binding proteins in an ATP-dependent manner without itself being part of a final effector complex. This Deinococcus radiodurans (strain ATCC 13939 / DSM 20539 / JCM 16871 / CCUG 27074 / LMG 4051 / NBRC 15346 / NCIMB 9279 / VKM B-1422 / R1) protein is DNA mismatch repair protein MutL.